The primary structure comprises 105 residues: Heat shock protein HspQ (105 aa).

The tract at residues 75–105 (SELQDEHPEQPSMDELAQTIRKQLQAPRLRN) is disordered.

Belongs to the HspQ family.

The protein resides in the cytoplasm. In terms of biological role, involved in the degradation of certain denaturated proteins, including DnaA, during heat shock stress. In Escherichia coli O127:H6 (strain E2348/69 / EPEC), this protein is Heat shock protein HspQ.